Reading from the N-terminus, the 251-residue chain is MIVYEYPFNERIRTLLRLEDLYEKFAFFIGQDHPQHHHVALATMFEMLEVAGRADLKSDLLQELERQKQTLLGFKSNPNVEAEMLDAILFDLDRISAALIASQGKTGQHIRENEWLMSIRGRTIIPGGACEFDLPSYYAWQHDSAEQRLADIHKWFTPLAPLFDAIGMVLRLLRESGRPVKMIAQTGSYQQMLQGKAYQMLRLNIDEALGAIPEISANKYMLWIRFTSQDGDMKPKAFEGDVPFELSLCSF.

It belongs to the ZapD family. Interacts with FtsZ.

The protein localises to the cytoplasm. Functionally, cell division factor that enhances FtsZ-ring assembly. Directly interacts with FtsZ and promotes bundling of FtsZ protofilaments, with a reduction in FtsZ GTPase activity. The protein is Cell division protein ZapD of Janthinobacterium sp. (strain Marseille) (Minibacterium massiliensis).